The primary structure comprises 441 residues: FBD-associated F-box protein At5g18780 (441 aa).

In terms of domain architecture, F-box spans 10–56 (EDRISILPEPLLCHILSFLRTKDSVRTSVLSSRWRDLWLWVPRLDLD). Residues 366–410 (LPRCLISSLASVDIESPITDKATELKLVSYLLENSTTLKKLVLRL) form the FBD domain.

The sequence is that of FBD-associated F-box protein At5g18780 from Arabidopsis thaliana (Mouse-ear cress).